The sequence spans 369 residues: Protein disulfide-isomerase erp38 (369 aa).

Residues 1-18 (MVLLKSLVVASLAAAVAA) form the signal peptide. 2 Thioredoxin domains span residues 19–130 (KSAV…EKTG) and 131–251 (VKAR…EKAG). Catalysis depends on nucleophile residues C50, C53, C170, and C173. Cystine bridges form between C50/C53 and C170/C173. The Prevents secretion from ER signature appears at 366–369 (KEEL).

It belongs to the protein disulfide isomerase family.

It is found in the endoplasmic reticulum lumen. It carries out the reaction Catalyzes the rearrangement of -S-S- bonds in proteins.. The chain is Protein disulfide-isomerase erp38 (erp38) from Neurospora crassa (strain ATCC 24698 / 74-OR23-1A / CBS 708.71 / DSM 1257 / FGSC 987).